The following is a 206-amino-acid chain: Histidine biosynthesis bifunctional protein HisIE (206 aa).

The phosphoribosyl-AMP cyclohydrolase stretch occupies residues 1 to 114 (MLKKINFIDI…FQVPSENLFF (114 aa)). The interval 115–206 (LHDLDCMLKF…NLKMRSNKQV (92 aa)) is phosphoribosyl-ATP pyrophosphohydrolase.

This sequence in the N-terminal section; belongs to the PRA-CH family. In the C-terminal section; belongs to the PRA-PH family.

The protein localises to the cytoplasm. It catalyses the reaction 1-(5-phospho-beta-D-ribosyl)-ATP + H2O = 1-(5-phospho-beta-D-ribosyl)-5'-AMP + diphosphate + H(+). The catalysed reaction is 1-(5-phospho-beta-D-ribosyl)-5'-AMP + H2O = 1-(5-phospho-beta-D-ribosyl)-5-[(5-phospho-beta-D-ribosylamino)methylideneamino]imidazole-4-carboxamide. The protein operates within amino-acid biosynthesis; L-histidine biosynthesis; L-histidine from 5-phospho-alpha-D-ribose 1-diphosphate: step 2/9. It functions in the pathway amino-acid biosynthesis; L-histidine biosynthesis; L-histidine from 5-phospho-alpha-D-ribose 1-diphosphate: step 3/9. The sequence is that of Histidine biosynthesis bifunctional protein HisIE (hisI) from Buchnera aphidicola subsp. Baizongia pistaciae (strain Bp).